A 163-amino-acid chain; its full sequence is MLARTIQRFSVVAKRGYAAAAPAANANPEELRLTFASPDTAVFSNAVVKQVDVPTLAGMVGVLANHVPTIGVLKPGVVSVTTNEGTVQRLFVSSGTLSVNIDGSCQVLAEEVLKVEEIDESAARAELDAAQRASGEGSEVARAEAQIRAEVAEALIKAATNQQ.

The transit peptide at 1–18 (MLARTIQRFSVVAKRGYA) directs the protein to the mitochondrion.

It belongs to the ATPase epsilon chain family. As to quaternary structure, subunit of the F-type ATPase which has 2 components, CF(1) - the catalytic core - and CF(0) - the membrane proton channel.

It localises to the mitochondrion. Its subcellular location is the mitochondrion inner membrane. Functionally, mitochondrial membrane ATP synthase (F(1)F(0) ATP synthase or Complex V) produces ATP from ADP in the presence of a proton gradient across the membrane which is generated by electron transport complexes of the respiratory chain. F-type ATPases consist of two structural domains, F(1) - containing the extramembraneous catalytic core, and F(0) - containing the membrane proton channel, linked together by a central stalk and a peripheral stalk. During catalysis, ATP turnover in the catalytic domain of F(1) is coupled via a rotary mechanism of the central stalk subunits to proton translocation. Part of the complex F(1) domain and of the central stalk which is part of the complex rotary element. This chain is ATP synthase subunit delta, mitochondrial, found in Caenorhabditis elegans.